A 70-amino-acid chain; its full sequence is Conotoxin Vc6.10 (70 aa).

Residues Met1–Ala19 form the signal peptide. The propeptide occupies Leu20–Asp40. Disulfide bonds link Cys43–Cys57, Cys50–Cys62, and Cys56–Cys69.

The protein belongs to the conotoxin O2 superfamily. In terms of tissue distribution, expressed by the venom duct.

The protein resides in the secreted. Its function is as follows. Inhibits voltage-gated ion channels. This is Conotoxin Vc6.10 from Conus victoriae (Queen Victoria cone).